The following is a 713-amino-acid chain: MDSLCLNSGLHGVIPAITAVGNGGCGGVVEVRATASAPSQKRGPFGFSFKYPLTPFWSRGGGGGIASRRRSGLCLDDAVLVDSGDSRKPIAEETAVEMDTERRNGSWVLKILDVQSTWKHEEEEDDDEVEDEDGDEDEEVELDDAVVSEDDGGCDVCSVLEDDGNEANKFQLDRESFSKLLRRVTLPESKLYAQLSYLGNLAYSISKIKPANLSKYYGLRFVTSSAEKTESALKAENGEVSGETKPIVEAEEEVEEEEKNKSRKISASAAYEIVASAASYLHSRTNNILPFNSSSKAENSDKHDVNLTNAESSSDVAYSVTSVVAAEEDVKQAVADDLKSTISSPCDWFICDDDQSHTRFVVIQGSESLASWQANLLFEPIEFEGLGAIVHRGIYEAAKGMYEQMLPEVKAHIKTHGTSAKFRFTGHSLGGSLSLLLNLMLLVRGEVPASSLLPVITYGAPFVLCGGDRLLKKLGLPKSHVQAIVMHRDIVPRAFSCNYPYHVAELLKAVNGNFRSHPCLNKQSMLYSPMGELLILQPDETFSPGHELLPSGNGLYLLTSDFESPDIEDSDEERLRAAQTVFLNTPHPLDILSDRSAYGSSGTIQRDHDMNSYLKAVRSVIRKEVNQIRRAKREHRRSLWWPILVARESGSSGIAVSNGQINGQDFSGMMQTGRKSLQRFSRLVASQHMPLIVVMLFPVKLLFLGAFNVFSFR.

The N-terminal 32 residues, 1–32, are a transit peptide targeting the chloroplast; it reads MDSLCLNSGLHGVIPAITAVGNGGCGGVVEVR. 2 disordered regions span residues 118–140 and 232–261; these read WKHE…DEEV and ALKA…EKNK. The span at 122-140 shows a compositional bias: acidic residues; that stretch reads EEEDDDEVEDEDGDEDEEV. Residues 426–430 carry the GXSXG motif; sequence GHSLG. S428 (acyl-ester intermediate) is an active-site residue. Residues D489 and H608 each act as charge relay system in the active site.

It belongs to the AB hydrolase superfamily. Lipase family.

The protein resides in the plastid. It is found in the chloroplast membrane. It localises to the chloroplast stroma. The enzyme catalyses a 1,2-diacyl-3-O-(beta-D-galactosyl)-sn-glycerol + 2 H2O = 3-beta-D-galactosyl-sn-glycerol + 2 a fatty acid + 2 H(+). It carries out the reaction a 1,2-diacyl-sn-glycero-3-phosphocholine + H2O = a 2-acyl-sn-glycero-3-phosphocholine + a fatty acid + H(+). The catalysed reaction is 1-hexadecanoyl-2-(9Z-octadecenoyl)-sn-glycero-3-phosphocholine + H2O = 2-(9Z-octadecenoyl)-sn-glycero-3-phosphocholine + hexadecanoate + H(+). It catalyses the reaction 1,2-di-(9Z-octadecenoyl)-sn-glycero-3-phosphocholine + H2O = 2-(9Z-octadecenoyl)-sn-glycero-3-phosphocholine + (9Z)-octadecenoate + H(+). The enzyme catalyses 1-octadecanoyl-2-(9Z-octadecenoyl)-sn-glycero-3-phosphocholine + H2O = 2-(9Z-octadecenoyl)-sn-glycero-3-phosphocholine + octadecanoate + H(+). It carries out the reaction 1-octadecanoyl-2-(9Z,12Z)-octadecadienoyl-sn-glycero-3-phosphocholine + H2O = 2-(9Z,12Z-octadecadienoyl)-sn-glycero-3-phosphocholine + octadecanoate + H(+). The catalysed reaction is 1,2-di-(9Z,12Z-octadecadienoyl)-sn-glycero-3-phosphocholine + H2O = 2-(9Z,12Z-octadecadienoyl)-sn-glycero-3-phosphocholine + (9Z,12Z)-octadecadienoate + H(+). It catalyses the reaction 1-(9Z-octadecenoyl)-2-hexadecanoyl-sn-glycero-3-phosphocholine + H2O = 2-hexadecanoyl-sn-glycero-3-phosphocholine + (9Z)-octadecenoate + H(+). Functionally, sn-1-specific phospholipase A1 that catalyzes the initial step of oxylipins and jasmonate (JA) biosynthesis. Hydrolyzes polyunsaturated acyl groups preferentially from chloroplastic monogalactosyldiacylglycerol (MGDG). May function downstream of abscisic acid (ABA) and provide a link between ABA-mediated abiotic stress responses and oxylipin and JA signalings. In vitro, possesses broad substrate specificity. Can hydrolyze the galactolipids monogalactosyldiacylglycerol (MGDG) and digalactosyldiacylglycerol (DGDG), the sulfolipid sulfoquinovosyldiacylglycerol (SQDG), and the phoshpolipids phosphatidylcholine (PC), and phosphatidylglycerol (PG). This chain is Phospholipase A1 PLIP2, chloroplastic, found in Arabidopsis thaliana (Mouse-ear cress).